The primary structure comprises 399 residues: Methylthioribose kinase (399 aa).

Residues Asn-40, Lys-57, and 111–113 (EDL) contribute to the ATP site. Asp-229 serves as a coordination point for substrate. ATP is bound at residue 246-248 (DAE). Position 344 (Arg-344) interacts with substrate.

The protein belongs to the methylthioribose kinase family. In terms of assembly, homodimer.

It catalyses the reaction 5-(methylsulfanyl)-D-ribose + ATP = 5-(methylsulfanyl)-alpha-D-ribose 1-phosphate + ADP + H(+). It functions in the pathway amino-acid biosynthesis; L-methionine biosynthesis via salvage pathway; S-methyl-5-thio-alpha-D-ribose 1-phosphate from S-methyl-5'-thioadenosine (hydrolase route): step 2/2. Its function is as follows. Catalyzes the phosphorylation of methylthioribose into methylthioribose-1-phosphate. This is Methylthioribose kinase from Erwinia tasmaniensis (strain DSM 17950 / CFBP 7177 / CIP 109463 / NCPPB 4357 / Et1/99).